The primary structure comprises 576 residues: Proline--tRNA ligase (576 aa).

Belongs to the class-II aminoacyl-tRNA synthetase family. ProS type 1 subfamily. As to quaternary structure, homodimer.

The protein resides in the cytoplasm. The enzyme catalyses tRNA(Pro) + L-proline + ATP = L-prolyl-tRNA(Pro) + AMP + diphosphate. Catalyzes the attachment of proline to tRNA(Pro) in a two-step reaction: proline is first activated by ATP to form Pro-AMP and then transferred to the acceptor end of tRNA(Pro). As ProRS can inadvertently accommodate and process non-cognate amino acids such as alanine and cysteine, to avoid such errors it has two additional distinct editing activities against alanine. One activity is designated as 'pretransfer' editing and involves the tRNA(Pro)-independent hydrolysis of activated Ala-AMP. The other activity is designated 'posttransfer' editing and involves deacylation of mischarged Ala-tRNA(Pro). The misacylated Cys-tRNA(Pro) is not edited by ProRS. This is Proline--tRNA ligase from Finegoldia magna (strain ATCC 29328 / DSM 20472 / WAL 2508) (Peptostreptococcus magnus).